The chain runs to 317 residues: Heme A synthase (317 aa).

The Cytoplasmic segment spans residues 1-6 (MQRSLK). Residues 7–27 (WFASTTTVAMLFVLIGGALVT) form a helical membrane-spanning segment. The Extracellular segment spans residues 28 to 54 (KTDSGMGCGRSWPLCHGQWIPDDITPQ). A disulfide bridge connects residues Cys35 and Cys42. Residues 55–75 (LVIELSHRLVSGLAAIMVLIL) traverse the membrane as a helical segment. The active site involves Glu58. His61 is a heme o binding site. Topologically, residues 76 to 91 (CIRSWRVMGHVRETKP) are cytoplasmic. Residues 92-112 (LAVLSFVFLVLQSLIGAAAVV) traverse the membrane as a helical segment. Residues 113-123 (WGQSDFVMALH) are Extracellular-facing. Heme o is bound at residue His123. The chain crosses the membrane as a helical span at residues 124-144 (FGISLISFAAVLLLTLLIFVV). Residues 145-159 (DKKFSPTSLQLDGQM) are Cytoplasmic-facing. The helical transmembrane segment at 160-180 (RFHIYGIIIYSYLVVYTGALV) threads the bilayer. The Extracellular segment spans residues 181–214 (RHTNASLACPSWPLCAKSRLLPVQFHEWVQMGHR). Cysteines 189 and 195 form a disulfide. His213 contacts heme b. Residues 215 to 235 (LAAAVIIIWIAVATVHAARYY) form a helical membrane-spanning segment. Over 236–243 (REQPVIYY) the chain is Cytoplasmic. Residues 244 to 264 (GWIISLLLVLAQMVTGALVVF) traverse the membrane as a helical segment. At 265–272 (TELNLYIS) the chain is on the extracellular side. The chain crosses the membrane as a helical span at residues 273 to 293 (LAHAFFISCLFGVLSYLLLLA). His275 serves as a coordination point for heme b. The Cytoplasmic segment spans residues 294–317 (LRTRRRPATAAGRSVEDTASAPLK).

The protein belongs to the COX15/CtaA family. Type 1 subfamily. Interacts with CtaB. The cofactor is heme b.

It localises to the cell membrane. The enzyme catalyses Fe(II)-heme o + 2 A + H2O = Fe(II)-heme a + 2 AH2. It participates in porphyrin-containing compound metabolism; heme A biosynthesis; heme A from heme O: step 1/1. Catalyzes the conversion of heme O to heme A by two successive hydroxylations of the methyl group at C8. The first hydroxylation forms heme I, the second hydroxylation results in an unstable dihydroxymethyl group, which spontaneously dehydrates, resulting in the formyl group of heme A. The chain is Heme A synthase from Geobacillus thermodenitrificans.